A 268-amino-acid polypeptide reads, in one-letter code: Small ribosomal subunit protein eS1 (268 aa).

The protein belongs to the eukaryotic ribosomal protein eS1 family. Component of the small ribosomal subunit. Mature ribosomes consist of a small (40S) and a large (60S) subunit. The 40S subunit contains about 33 different proteins and 1 molecule of RNA (18S). The 60S subunit contains about 49 different proteins and 3 molecules of RNA (28S, 5.8S and 5S).

It localises to the cytoplasm. In Artemia franciscana (Brine shrimp), this protein is Small ribosomal subunit protein eS1.